The sequence spans 630 residues: DNA mismatch repair protein MutL (630 aa).

Belongs to the DNA mismatch repair MutL/HexB family.

This protein is involved in the repair of mismatches in DNA. It is required for dam-dependent methyl-directed DNA mismatch repair. May act as a 'molecular matchmaker', a protein that promotes the formation of a stable complex between two or more DNA-binding proteins in an ATP-dependent manner without itself being part of a final effector complex. This is DNA mismatch repair protein MutL from Lactobacillus johnsonii (strain CNCM I-12250 / La1 / NCC 533).